A 318-amino-acid chain; its full sequence is Mechanosensory protein 3 (318 aa).

LIM zinc-binding domains are found at residues 27–86 (NKCY…DYSA) and 87–152 (HRCA…PMDD). Positions 214-273 (RRGPRTTIRQNQLDVLNEMFSNTPKPSKHARAKLALETGLSMRVIQVWFQNRRSKERRLK) form a DNA-binding region, homeobox.

The protein localises to the nucleus. Functionally, specifies differentiation of the set of six touch receptor neurons. Binds cooperatively as a heterodimer with unc-86 to sites in the mec-3 gene promoter. This chain is Mechanosensory protein 3 (mec-3), found in Caenorhabditis briggsae.